The sequence spans 171 residues: Photosystem I assembly protein Ycf3 (171 aa).

3 TPR repeats span residues 35 to 68, 72 to 105, and 120 to 153; these read AFTYYRDGMSAQAEGEYAEALQNYYEAMRLEVDA, SYILYNIGLIHTSNGEHAKALEYYYQALERNPYL, and GEQAIESGNSRISNLLFDKAADYWKEAIRLAPTN.

The protein belongs to the Ycf3 family.

The protein localises to the plastid. Its subcellular location is the chloroplast thylakoid membrane. Essential for the assembly of the photosystem I (PSI) complex. May act as a chaperone-like factor to guide the assembly of the PSI subunits. This is Photosystem I assembly protein Ycf3 from Nephroselmis olivacea (Green alga).